The sequence spans 65 residues: Large ribosomal subunit protein bL35 (65 aa).

Residues 1–52 are disordered; it reads MPKMKSNRAAAKRFKRTANGGFKSGNSFTSHRFHGKTKKQRRQLRGLSMMDK. Residues 31 to 44 are compositionally biased toward basic residues; the sequence is HRFHGKTKKQRRQL.

The protein belongs to the bacterial ribosomal protein bL35 family.

This chain is Large ribosomal subunit protein bL35, found in Limosilactobacillus reuteri (strain DSM 20016) (Lactobacillus reuteri).